We begin with the raw amino-acid sequence, 423 residues long: Serine--tRNA ligase (423 aa).

Position 231–233 (231–233 (TAE)) interacts with L-serine. 262–264 (RSE) is an ATP binding site. Glu-285 contributes to the L-serine binding site. 349-352 (EISS) provides a ligand contact to ATP. Residue Ser-384 participates in L-serine binding.

Belongs to the class-II aminoacyl-tRNA synthetase family. Type-1 seryl-tRNA synthetase subfamily. As to quaternary structure, homodimer. The tRNA molecule binds across the dimer.

Its subcellular location is the cytoplasm. It catalyses the reaction tRNA(Ser) + L-serine + ATP = L-seryl-tRNA(Ser) + AMP + diphosphate + H(+). It carries out the reaction tRNA(Sec) + L-serine + ATP = L-seryl-tRNA(Sec) + AMP + diphosphate + H(+). It participates in aminoacyl-tRNA biosynthesis; selenocysteinyl-tRNA(Sec) biosynthesis; L-seryl-tRNA(Sec) from L-serine and tRNA(Sec): step 1/1. Its function is as follows. Catalyzes the attachment of serine to tRNA(Ser). Is also able to aminoacylate tRNA(Sec) with serine, to form the misacylated tRNA L-seryl-tRNA(Sec), which will be further converted into selenocysteinyl-tRNA(Sec). This chain is Serine--tRNA ligase, found in Lactococcus lactis subsp. cremoris (strain MG1363).